The sequence spans 251 residues: MFAEVLTIGDELLTGHTVDSNSAFIASKLTEQGYWVRRITTVGDDVEEIKAVVGEILARKPEVLVISGGLGPTHDDVTMLAVAEALGRKLVLCEKCLERIKAFYEKLYSEGYIDDPSLNEGRKKMAYLPEGAEPLENTGGAAPGAFIEHKGVKIFVLPGMPREMKAMLEKEVLPRLGRRKFLQRKFLAEITDESKLAPILREALERFNVRIHSSPKGFGKYIGLIIFAEDEGELEKTVEYLESRGIRLEEA.

The protein belongs to the CinA family.

This is Protein TK1472 from Thermococcus kodakarensis (strain ATCC BAA-918 / JCM 12380 / KOD1) (Pyrococcus kodakaraensis (strain KOD1)).